A 167-amino-acid chain; its full sequence is Translation initiation factor IF-3 (167 aa).

This sequence belongs to the IF-3 family. Monomer.

The protein localises to the cytoplasm. IF-3 binds to the 30S ribosomal subunit and shifts the equilibrium between 70S ribosomes and their 50S and 30S subunits in favor of the free subunits, thus enhancing the availability of 30S subunits on which protein synthesis initiation begins. This Shouchella clausii (strain KSM-K16) (Alkalihalobacillus clausii) protein is Translation initiation factor IF-3.